We begin with the raw amino-acid sequence, 753 residues long: MTKRSKGANEDKLIETKSKNVSGKSQKQKKPVEAESLKEEDLLQASGTDSDYDGDSLPGSLNSDDFDSDFSDSEDDGTHEGTEDGDVEFSDDDDVLEHDGSIDNEDDDGSEHVGSDNNEEHGSDEDSERGEAVEESDSSEDEVPSRNTVGNVPLKWYEDEKHIGYDLTGKKITKKEKQDKLDSFLATIDDSKTWRKIYDEYNDEDVELTKEESKIVQRILKGEAPHADFDPYAPYVEWFKHDDAIHPLSSAPEPKRRFIPSKWEAKKVVKIVRAIRKGWIKFDKPEEEPNVYLLWGDDSTSDQKSKHLTYIPPPKLKLPGHDESYNPSLEYIPTEEEKASYELMFEEDRPKFIPTRFTSLRSIPAYENALKESFERCLDLYLCPRVRKKRINIDPESLKPKLPSRKDLRPYPNSCYLEYKGHTGAVTSISTDSSGEWIASGSTDGSVRMWEVETGRCLKVWQFDEAIMCVAWNPLSRLPVLAVAMGRDLFFLNTELGTDEEQEITKERLHSGNIPEPDASVAAIVTWLPDELYGGIKIRHFKSISSIDWHRKGDYLSTVMASGETRGVVLHQLSKQKTQRLPFKIRGLPVCTLFHPSLSYFFVATRKDVRVYNLLKPGEATKKLETGLREISSMAIHPGGDNLIVGSKEGKMCWFDMDLSSKPYKTLKNHPKDITNVAVHRSYPLFASCSEDSTAYVFHGMVYNDLNQNPLIVPLEILRGHSSKGGVLDCKFHPRQPWLFTAGADSIIKLYCH.

The segment at 1-155 is disordered; it reads MTKRSKGANE…RNTVGNVPLK (155 aa). Composition is skewed to basic and acidic residues over residues 7–18 and 30–41; these read GANEDKLIETKS and KPVEAESLKEED. Composition is skewed to acidic residues over residues 64 to 75 and 83 to 109; these read DDFDSDFSDSED and EDGDVEFSDDDDVLEHDGSIDNEDDDG. Basic and acidic residues predominate over residues 110–121; the sequence is SEHVGSDNNEEH. The span at 122–142 shows a compositional bias: acidic residues; that stretch reads GSDEDSERGEAVEESDSSEDE. WD repeat units follow at residues 421–462, 464–502, 539–581, 626–665, 669–708, and 722–753; these read GHTG…KVWQ, DEAIMCVAWNPLSRLPVLAVAMGRDLFFLNTELGTDEEQ, RHFK…TQRL, TGLREISSMAIHPGGDNLIVGSKEGKMCWFDMDLSSKPYK, NHPKDITNVAVHRSYPLFASCSEDSTAYVFHGMVYNDLNQ, and SSKGGVLDCKFHPRQPWLFTAGADSIIKLYCH.

The protein belongs to the WD repeat BOP1/ERB1 family. Interacts with PES. Interacts with WDR12.

It is found in the nucleus. Its subcellular location is the nucleolus. The protein localises to the nucleoplasm. Required for maturation of ribosomal RNAs and formation of the large ribosomal subunit. Plays an essential role in cell growth and survival through its regulation of ribosome biogenesis and mitotic progression. This is Ribosome biogenesis protein BOP1 homolog from Arabidopsis thaliana (Mouse-ear cress).